We begin with the raw amino-acid sequence, 170 residues long: Metalloproteinase inhibitor 4 (170 aa).

One can recognise an NTR domain in the interval 1–105 (ISSEKVVPAS…SLNHHYHLNC (105 aa)). 2 involved in metalloproteinase-binding regions span residues 6–9 (VVPA) and 48–49 (SS). 3 disulfide bridges follow: Cys-107/Cys-154, Cys-112/Cys-117, and Cys-125/Cys-146.

It belongs to the protease inhibitor I35 (TIMP) family.

It is found in the secreted. Complexes with metalloproteinases (such as collagenases) and irreversibly inactivates them by binding to their catalytic zinc cofactor. This Oryctolagus cuniculus (Rabbit) protein is Metalloproteinase inhibitor 4 (TIMP4).